The following is a 211-amino-acid chain: Stromal cell-derived factor 2 (211 aa).

Positions 1-18 (MAVVPLLLLGGLWSAVGA) are cleaved as a signal peptide. 3 consecutive MIR domains span residues 21–75 (LGVV…IRGK), 83–138 (GTPI…VLCN), and 139–193 (GPYW…AMEG).

The protein localises to the secreted. In Homo sapiens (Human), this protein is Stromal cell-derived factor 2 (SDF2).